Here is an 89-residue protein sequence, read N- to C-terminus: uncharacterized protein (89 aa).

Residues 66–89 (RIKEQSSSSSATRTTQEPSLHLPD) are disordered.

This is an uncharacterized protein from Cestrum parqui (CmYLCV).